A 385-amino-acid polypeptide reads, in one-letter code: Tryptophan--tRNA ligase (385 aa).

A 'HIGH' region motif is present at residues 82–90; that stretch reads PSGPMHIGH. Residues 253–257 carry the 'KMSKS' region motif; the sequence is KMSAS.

Belongs to the class-I aminoacyl-tRNA synthetase family.

It localises to the cytoplasm. The catalysed reaction is tRNA(Trp) + L-tryptophan + ATP = L-tryptophyl-tRNA(Trp) + AMP + diphosphate + H(+). The sequence is that of Tryptophan--tRNA ligase from Pyrococcus abyssi (strain GE5 / Orsay).